We begin with the raw amino-acid sequence, 335 residues long: 2-keto-3-deoxygluconate permease (335 aa).

Helical transmembrane passes span 10–30, 42–62, 77–97, 100–120, 141–161, 163–183, 200–220, 224–244, 254–274, and 289–309; these read IPGGLMLVPLLLGAILHTAAP, GIITGTLPILSVWFFCIGASI, LVLTKIAVAWVVALIAAQLLP, GIEVGMLAGLSTLALVSAMDM, AFVLMSVESGPLMTMVILGSA, LASFQPHHFVGAVLPFLIGFA, QTLIPFFGFALGNTINLGVIL, LLGIAMGLLVIVVTGIPLIIA, TAGLAASSTAGAAVANPVIIA, and ALVATCVIVTSILVPILTAMY.

This sequence belongs to the KdgT transporter family.

Its subcellular location is the cell inner membrane. It catalyses the reaction 2-dehydro-3-deoxy-D-gluconate(in) + H(+)(in) = 2-dehydro-3-deoxy-D-gluconate(out) + H(+)(out). Catalyzes the proton-dependent uptake of 2-keto-3-deoxygluconate (KDG) into the cell. The protein is 2-keto-3-deoxygluconate permease of Tolumonas auensis (strain DSM 9187 / NBRC 110442 / TA 4).